We begin with the raw amino-acid sequence, 1099 residues long: MAAAAASALGASAPKALAPADGPIVAGLDKLVNLEGVHDLFEAMRGAYGEDPAWKGLMSCDVVYLKDITTAIGVKDTSVGIFRKFSDGCSWCPTGAECFLSMKDLAYMKAQSAKAQRLTASLATTSNLIARAMRAESELKRARDEERKVDARYKDILEHSLAARKALQKELDETRERELHLLKELGKRSSIRTKAFSFFDWLFMAVVFFLFLHYTSAECVKPDFGCLVVNSNLPVPSLTFHDVMARCYNTFGNIVLSSQIDAARLREECEQSANKFLGTHIGDPAHKVWCENRLETLIPVECDSSEFLEIFTSNLNAFMVSVSQFYKTISYYKLDALVTFAFSAALATNKLKMVMVLPLLLVALYLNVPPITVTIASVIFQPLILPFVGFQLVFPNFLPYNLFVAWVWMVCQAFFSSDGVKLLVSVSTALVQVVFLAVWSISVIVLQQLSIPMVAQILLFVATLTVSVGVKFANSTITVVHPDGNTEKVSRVTLVRQSMAKRISQIKQSLTIRGVIPSGPNRFDSIVVVEGQGGSGVGWRFMNSIFTAGHVVQGSKFVTIKSESTQVKVKVKRVIDLFECVDTLVEIPLTKEFQHIKPLRLAKKVEDSYLQLCAFKPDMVEKASYQGWCTIDSGFIFNSFNTQFGNSGAPYVDSDGRLVGMHLGSQGVISQGVVLVDTLKTQFLAQQSQIDDQLMERIIEGTKVSHAAILTELDRMRTKVEEVALVSARVNQLESQLKDLYEFSSNSIKCLSDDIEKMVCAQLFDEINLQSVMEKISALPPTEKLAKLVEVFVEQKKKGKTKRTARGGKHALGKKYLSKAHFSRMRMLTEEEYNKMVEDGFSPDEIKEVVDQLREQAWQNYLIDNDIGEDDDLDWYDDMLEDERLNEEIDRRVEAALEDRGELAYQKIRRTFVDQALIHLITLKKGNWQTTKVECQPEREEAYKEQFQKAVKQEDLTEGTSYAIYSAGDATILIENKEIDHTEIKPVTTGAKTVQEYPKDARTTVATFDDNKKDIVKTKRTTEIVLEQRKKTCRTCGETRPHNHKMCRDRHTRRFCFWCGVVHSDVEGHSRDLKCPKCSAGFANLREMEQHAVTTCSKN.

Transmembrane regions (helical) follow at residues 195–215 (AFSF…LHYT), 329–348 (ISYY…ALAT), 353–373 (MVMV…PITV), 397–417 (FLPY…FFSS), 426–446 (VSTA…VIVL), and 450–470 (SIPM…SVGV). Residues His550, Asp582, and Ser647 each act as charge relay system; for serine protease activity in the active site. Tyr833 bears the O-(5'-phospho-RNA)-tyrosine mark.

This sequence belongs to the astroviridae polyprotein 1A family. Monomer. Post-translationally, cleaved by the viral and host proteases. The protease is probably autocatalytically cleaved.

Its subcellular location is the host membrane. The enzyme catalyses RNA(n) + a ribonucleoside 5'-triphosphate = RNA(n+1) + diphosphate. In terms of biological role, responsible for the cleavage of the polyprotein into functional products. Protein covalently attached to the 5' extremity of the genomic and subgenomic RNAs. It may serve as a primer for the replicase. The protein is Non-structural polyprotein 1A (ORF1) of Turkey astrovirus 1 (TAstV-1).